The primary structure comprises 79 residues: Dolichyl-diphosphooligosaccharide--protein glycosyltransferase subunit TMEM258 (79 aa).

The next 2 membrane-spanning stretches (helical) occupy residues 19-39 (PLLT…FTMI) and 55-75 (FIAA…LLWV).

Belongs to the OST5 family. Component of the oligosaccharyltransferase (OST) complex.

The protein resides in the membrane. It participates in protein modification; protein glycosylation. In terms of biological role, subunit of the oligosaccharyl transferase (OST) complex that catalyzes the initial transfer of a defined glycan (Glc(3)Man(9)GlcNAc(2) in eukaryotes) from the lipid carrier dolichol-pyrophosphate to an asparagine residue within an Asn-X-Ser/Thr consensus motif in nascent polypeptide chains, the first step in protein N-glycosylation. N-glycosylation occurs cotranslationally and the complex associates with the Sec61 complex at the channel-forming translocon complex that mediates protein translocation across the endoplasmic reticulum (ER). All subunits are required for a maximal enzyme activity. This is Dolichyl-diphosphooligosaccharide--protein glycosyltransferase subunit TMEM258 from Caenorhabditis elegans.